Consider the following 460-residue polypeptide: 3'3'-cGAMP-specific phosphodiesterase 3 (460 aa).

In terms of domain architecture, HD spans 28–189; it reads PPEHCIRCCW…IPLFSRIALL (162 aa). Residues 260-455 enclose the HD-GYP domain; it reads DDAYLECIVT…LPDEYTQLPH (196 aa). The a divalent metal cation site is built by H317 and D318. K321 functions as the Proton donor in the catalytic mechanism. A divalent metal cation is bound by residues H346, H370, H371, and D399.

Monomer. Requires Mn(2+) as cofactor.

It carries out the reaction 3',3'-cGAMP + H2O = 5'-pApG-3' + H(+). Functionally, phosphodiesterase (PDE) that catalyzes the hydrolysis of 3'3'-cyclic GMP-AMP (3'3'-cGAMP), leading to linear 5'-pApG. Counteracts the function of the 3'3'-cGAMP synthase DncV, and is involved in the modulation of intracellular 3'3'-cGAMP levels. Enhances bacterial chemotaxis and inhibits intestinal colonization in vivo. Thus exerts a crucial role in regulating bacterial infectivity through catalyzing 3'3'-cGAMP degradation. Is specific for 3'3'-cGAMP since it cannot degrade other cGAMP linkage isomers (3'2'-, 2'3'-, and 2'2'-cGAMPs); is also able to hydrolyze c-di-GMP but not c-di-AMP. The chain is 3'3'-cGAMP-specific phosphodiesterase 3 from Vibrio cholerae serotype O1 (strain ATCC 39315 / El Tor Inaba N16961).